The primary structure comprises 155 residues: Cyclic pyranopterin monophosphate synthase (155 aa).

Residues 75 to 77 and 111 to 112 contribute to the substrate site; these read LCH and ME. The active site involves D126.

This sequence belongs to the MoaC family. In terms of assembly, homohexamer; trimer of dimers.

It carries out the reaction (8S)-3',8-cyclo-7,8-dihydroguanosine 5'-triphosphate = cyclic pyranopterin phosphate + diphosphate. The protein operates within cofactor biosynthesis; molybdopterin biosynthesis. Catalyzes the conversion of (8S)-3',8-cyclo-7,8-dihydroguanosine 5'-triphosphate to cyclic pyranopterin monophosphate (cPMP). This is Cyclic pyranopterin monophosphate synthase from Corynebacterium efficiens (strain DSM 44549 / YS-314 / AJ 12310 / JCM 11189 / NBRC 100395).